The chain runs to 349 residues: DNA replication and repair protein RecF (349 aa).

Glycine 29 to threonine 36 provides a ligand contact to ATP.

This sequence belongs to the RecF family.

The protein localises to the cytoplasm. In terms of biological role, the RecF protein is involved in DNA metabolism; it is required for DNA replication and normal SOS inducibility. RecF binds preferentially to single-stranded, linear DNA. It also seems to bind ATP. This chain is DNA replication and repair protein RecF, found in Acholeplasma laidlawii (strain PG-8A).